Consider the following 241-residue polypeptide: 2-C-methyl-D-erythritol 4-phosphate cytidylyltransferase (241 aa).

This sequence belongs to the IspD/TarI cytidylyltransferase family. IspD subfamily. Homodimer.

It carries out the reaction 2-C-methyl-D-erythritol 4-phosphate + CTP + H(+) = 4-CDP-2-C-methyl-D-erythritol + diphosphate. Its pathway is isoprenoid biosynthesis; isopentenyl diphosphate biosynthesis via DXP pathway; isopentenyl diphosphate from 1-deoxy-D-xylulose 5-phosphate: step 2/6. Catalyzes the formation of 4-diphosphocytidyl-2-C-methyl-D-erythritol from CTP and 2-C-methyl-D-erythritol 4-phosphate (MEP). In Yersinia pestis, this protein is 2-C-methyl-D-erythritol 4-phosphate cytidylyltransferase.